The primary structure comprises 301 residues: Protoheme IX farnesyltransferase (301 aa).

The next 9 helical transmembrane spans lie at 20–42 (FTEL…GMWL), 55–75 (VDVI…SGAF), 105–125 (ALMV…MTTW), 126–146 (QAGV…SLYA), 150–172 (LVSN…WFAV), 176–198 (FSMV…FYAI), 227–247 (MFFW…LGIV), 249–269 (VILA…GFKM), and 280–300 (FIYS…ISIF).

This sequence belongs to the UbiA prenyltransferase family. Protoheme IX farnesyltransferase subfamily. Interacts with CtaA.

Its subcellular location is the cell membrane. It carries out the reaction heme b + (2E,6E)-farnesyl diphosphate + H2O = Fe(II)-heme o + diphosphate. It participates in porphyrin-containing compound metabolism; heme O biosynthesis; heme O from protoheme: step 1/1. Functionally, converts heme B (protoheme IX) to heme O by substitution of the vinyl group on carbon 2 of heme B porphyrin ring with a hydroxyethyl farnesyl side group. This Listeria welshimeri serovar 6b (strain ATCC 35897 / DSM 20650 / CCUG 15529 / CIP 8149 / NCTC 11857 / SLCC 5334 / V8) protein is Protoheme IX farnesyltransferase.